Consider the following 462-residue polypeptide: NAD-capped RNA hydrolase NUDT12 (462 aa).

ANK repeat units follow at residues 11-40 (EIVT…SLLN), 45-74 (NGWT…DRSI), and 78-98 (SRQT…ANLL). N6-succinyllysine is present on Lys-185. Zn(2+)-binding residues include Cys-284 and Cys-287. Lys-292 is subject to N6-succinyllysine. Zn(2+) is bound by residues Cys-302 and Cys-307. Residues Tyr-318, 354–356 (AGF), Glu-370, Glu-374, and Glu-415 each bind substrate. Residues 319–453 (PRVDPVVIMQ…SRAIAHQLIK (135 aa)) enclose the Nudix hydrolase domain. Mg(2+) contacts are provided by Ala-354, Glu-370, Glu-374, and Glu-415. The short motif at 355-376 (GFIEPGETIEDAVRREVEEESG) is the Nudix box element. The Microbody targeting signal motif lies at 460-462 (PNL).

Belongs to the Nudix hydrolase family. NudC subfamily. In terms of assembly, homodimer. Homodimerization is essential for its catalytic activity and protein stability. Interacts (via ANK repeats) with BLMH. Requires Mg(2+) as cofactor. Zn(2+) serves as cofactor.

It localises to the cytoplasm. The protein localises to the peroxisome. Its subcellular location is the cytoplasmic granule. It carries out the reaction a 5'-end NAD(+)-phospho-ribonucleoside in mRNA + H2O = a 5'-end phospho-adenosine-phospho-ribonucleoside in mRNA + beta-nicotinamide D-ribonucleotide + 2 H(+). It catalyses the reaction NAD(+) + H2O = beta-nicotinamide D-ribonucleotide + AMP + 2 H(+). The enzyme catalyses NADH + H2O = reduced beta-nicotinamide D-ribonucleotide + AMP + 2 H(+). The catalysed reaction is NADPH + H2O = reduced beta-nicotinamide D-ribonucleotide + adenosine 2',5'-bisphosphate + 2 H(+). MRNA decapping enzyme that specifically removes the nicotinamide adenine dinucleotide (NAD) cap from a subset of mRNAs by hydrolyzing the diphosphate linkage to produce nicotinamide mononucleotide (NMN) and 5' monophosphate mRNA. The NAD-cap is present at the 5'-end of some RNAs; in contrast to the canonical N7 methylguanosine (m7G) cap, the NAD cap promotes mRNA decay. Preferentially acts on NAD-capped transcripts in response to nutrient stress. Also acts on free nicotinamide adenine dinucleotide molecules: hydrolyzes NAD(H) into NMN(H) and AMP, and NADPH into NMNH and 2',5'-ADP. May act to regulate the concentration of peroxisomal nicotinamide nucleotide cofactors required for oxidative metabolism in this organelle. Regulates the levels of circadian clock components PER1, PER2, PER3 and CRY2 in the liver. This Homo sapiens (Human) protein is NAD-capped RNA hydrolase NUDT12.